The primary structure comprises 323 residues: Annexin A3 (323 aa).

Position 2 is an N-acetylalanine (alanine 2). Annexin repeat units follow at residues 18–89, 90–161, 173–245, and 249–320; these read FSPS…ALVT, PPAV…TLAD, HLAK…AIVN, and NTPA…KICG. Threonine 267 bears the Phosphothreonine mark.

This sequence belongs to the annexin family.

Functionally, inhibitor of phospholipase A2, also possesses anti-coagulant properties. Also cleaves the cyclic bond of inositol 1,2-cyclic phosphate to form inositol 1-phosphate. This is Annexin A3 (ANXA3) from Homo sapiens (Human).